A 483-amino-acid chain; its full sequence is Regulatory protein ViaA (483 aa).

It belongs to the ViaA family. As to quaternary structure, homodimer. Interacts with RavA.

It is found in the cytoplasm. Functionally, component of the RavA-ViaA chaperone complex, which may act on the membrane to optimize the function of some of the respiratory chains. ViaA stimulates the ATPase activity of RavA. The polypeptide is Regulatory protein ViaA (Shigella boydii serotype 18 (strain CDC 3083-94 / BS512)).